The chain runs to 599 residues: Subtilisin-like protease 1 (599 aa).

Positions 1–20 are cleaved as a signal peptide; the sequence is MRTVFIYACIISLVLRTIPA. The propeptide at 21–195 is inhibition peptide; it reads HNDLMSKEKE…VESDELVGAD (175 aa). N-linked (GlcNAc...) asparagine glycosylation is present at N57. Residues 74–101 are a coiled coil; the sequence is EDAPKEELNKIEMEKKKAEEEAKNSKKK. The Ca(2+) site is built by N123, T126, P128, and G183. A glycan (N-linked (GlcNAc...) asparagine) is linked at N227. Residue D251 participates in Ca(2+) binding. Residues 257-574 form the Peptidase S8 domain; it reads QWGLDLARLD…GGYIDILNAV (318 aa). 2 cysteine pairs are disulfide-bonded: C283-C393 and C372-C389. Residue D286 is the Charge relay system of the active site. Residues D295, E306, D314, D315, D316, N318, I320, D322, and D323 each contribute to the Ca(2+) site. N-linked (GlcNAc...) asparagine glycosylation is present at N331. Residue H342 is the Charge relay system of the active site. I353 is a binding site for Ca(2+). N-linked (GlcNAc...) asparagine glycosylation occurs at N355. Ca(2+) contacts are provided by N356, I358, and V360. N402 and N434 each carry an N-linked (GlcNAc...) asparagine glycan. Residues C435 and C448 are joined by a disulfide bond. S519 serves as the catalytic Charge relay system.

Belongs to the peptidase S8 family. Post-translationally, the N-terminal prodomain is cleaved.

The protein localises to the secreted. Its subcellular location is the parasitophorous vacuole lumen. It localises to the cytoplasmic vesicle. It is found in the secretory vesicle. It carries out the reaction Hydrolysis of proteins with broad specificity for peptide bonds, and a preference for a large uncharged residue in P1. Hydrolyzes peptide amides.. Its function is as follows. Mediates the proteolytic maturation of serine protease SERA3. Mediates the proteolytic maturation of MSP1, and thereby may prime the parasite cell surface for invasion of fresh erythrocytes. Required for completion of the parasite pre-erythrocytic stages. Required for hepatic schizont development and merozoite formation. Required for the egress of the hepatic merozoites from the parasitophorous vacuole. Required for parasite infectivity during blood stages. Required for male gamete egress. The sequence is that of Subtilisin-like protease 1 from Plasmodium berghei (strain Anka).